The primary structure comprises 397 residues: 8-amino-7-oxononanoate synthase (397 aa).

Arg23 provides a ligand contact to substrate. 110–111 is a binding site for pyridoxal 5'-phosphate; it reads GY. Residue His135 participates in substrate binding. Pyridoxal 5'-phosphate contacts are provided by Ser181, His209, and Thr237. Lys240 is modified (N6-(pyridoxal phosphate)lysine). Thr354 is a binding site for substrate.

The protein belongs to the class-II pyridoxal-phosphate-dependent aminotransferase family. BioF subfamily. As to quaternary structure, homodimer. The cofactor is pyridoxal 5'-phosphate.

The enzyme catalyses 6-carboxyhexanoyl-[ACP] + L-alanine + H(+) = (8S)-8-amino-7-oxononanoate + holo-[ACP] + CO2. The protein operates within cofactor biosynthesis; biotin biosynthesis. In terms of biological role, catalyzes the decarboxylative condensation of pimeloyl-[acyl-carrier protein] and L-alanine to produce 8-amino-7-oxononanoate (AON), [acyl-carrier protein], and carbon dioxide. The sequence is that of 8-amino-7-oxononanoate synthase from Anaeromyxobacter dehalogenans (strain 2CP-C).